A 277-amino-acid chain; its full sequence is Shikimate dehydrogenase (NADP(+)) (277 aa).

Residues 15–17 (SLS) and Thr-62 contribute to the shikimate site. Lys-66 (proton acceptor) is an active-site residue. Residues Asn-87 and Asp-102 each contribute to the shikimate site. NADP(+) is bound by residues 127–131 (GAGGA), 151–156 (NRTVDK), and Ile-219. Residue Tyr-221 coordinates shikimate. Residue Gly-242 coordinates NADP(+).

It belongs to the shikimate dehydrogenase family. As to quaternary structure, homodimer.

It catalyses the reaction shikimate + NADP(+) = 3-dehydroshikimate + NADPH + H(+). It participates in metabolic intermediate biosynthesis; chorismate biosynthesis; chorismate from D-erythrose 4-phosphate and phosphoenolpyruvate: step 4/7. Its function is as follows. Involved in the biosynthesis of the chorismate, which leads to the biosynthesis of aromatic amino acids. Catalyzes the reversible NADPH linked reduction of 3-dehydroshikimate (DHSA) to yield shikimate (SA). The protein is Shikimate dehydrogenase (NADP(+)) of Bacillus cereus (strain 03BB102).